We begin with the raw amino-acid sequence, 302 residues long: MGRKRKGRDISGWLVVDKPAGLTSTAVVNKVRWAFDAKKAGHAGTLDPEATGVLAVALGEATKTVPFITDAMKAYTFTVTLGAATNTDDAEGEVIATSAERPTDDDIKEALLGFIGEIQQVPPKFSAVKIDGQRAYKLARDGEEVELSARPLWVEELVMLDRPDADHVVLEMTCGKGGYVRSIARDLGEKLGCLGHVRELRRIWSGPFDAEDGVTLEQIDALAKSPEIDQFLRPLEEGLADLPELKCTPQGATRLRNGNPGMVIASDVEYGEEAWASLEGKAVAVGTFKAGELHPSRVFNQD.

The Nucleophile role is filled by aspartate 47.

Belongs to the pseudouridine synthase TruB family. Type 1 subfamily.

The enzyme catalyses uridine(55) in tRNA = pseudouridine(55) in tRNA. In terms of biological role, responsible for synthesis of pseudouridine from uracil-55 in the psi GC loop of transfer RNAs. The polypeptide is tRNA pseudouridine synthase B (Ruegeria sp. (strain TM1040) (Silicibacter sp.)).